A 429-amino-acid chain; its full sequence is Chordin-like protein 2 (429 aa).

The N-terminal stretch at 1–25 (MVPEVRVLSSLLGLALLWFPLDSHA) is a signal peptide. VWFC domains are found at residues 31-96 (MFCL…PKCV) and 109-175 (KSCQ…QACK). N114 is a glycosylation site (N-linked (GlcNAc...) asparagine). S182 carries the post-translational modification Phosphoserine; by FAM20C. The segment at 182-224 (SDEEDSVQSLHGVRHPQDPCSSDAGRKRGPGTPAPTGLSAPLS) is disordered. One can recognise a VWFC 3 domain in the interval 250–315 (KACVHGGKTY…VAGKCCKICP (66 aa)).

In terms of assembly, interacts with GDF5. May interact with BMP2, BMP4, BMP5, BMP6, BMP7 and INHBA. Post-translationally, phosphorylated by FAM20C in the extracellular medium. Highly expressed in uterus. Moderately expressed in heart, liver, prostate, testis and ovary. Weakly expressed in skeletal muscle, kidney, spleen, small intestine and colon. Expressed in the secretory epithelial cells of uterine endometrium, fallopian tubes, endocervical glands, bladder and prostate, as well as the transitional epithelium of the urinary bladder, and in bone osteoblasts (at protein level). In normal cartilage, expression was confined in a few chondrocytes in the superficial zone as well as in the middle zone. In diseased cartilage coming from osteoarthritic patients, expression was limited to the middle zone of chondrocytes. Isoform 1 and isoform 2 are expressed in fetal cerebellum and heart, while only isoform 2 is detected in fetal spleen. Isoform 2 present in plasma.

Its subcellular location is the secreted. It localises to the cytoplasm. Functionally, may inhibit BMPs activity by blocking their interaction with their receptors. Has a negative regulator effect on the cartilage formation/regeneration from immature mesenchymal cells, by preventing or reducing the rate of matrix accumulation. Implicated in tumor angiogenesis. May play a role during myoblast and osteoblast differentiation, and maturation. The chain is Chordin-like protein 2 (CHRDL2) from Homo sapiens (Human).